The following is a 180-amino-acid chain: UPF0227 protein CKO_01948 (180 aa).

It belongs to the UPF0227 family.

This Citrobacter koseri (strain ATCC BAA-895 / CDC 4225-83 / SGSC4696) protein is UPF0227 protein CKO_01948.